The chain runs to 212 residues: Ribonuclease HII (212 aa).

The RNase H type-2 domain maps to 17-206 (RVIAGVDEAG…KSTKPQSLQT (190 aa)). Positions 23, 24, and 115 each coordinate a divalent metal cation.

It belongs to the RNase HII family. Requires Mn(2+) as cofactor. Mg(2+) is required as a cofactor.

It localises to the cytoplasm. The catalysed reaction is Endonucleolytic cleavage to 5'-phosphomonoester.. In terms of biological role, endonuclease that specifically degrades the RNA of RNA-DNA hybrids. The polypeptide is Ribonuclease HII (Syntrophus aciditrophicus (strain SB)).